Here is a 396-residue protein sequence, read N- to C-terminus: S-adenosylmethionine synthase (396 aa).

His-16 serves as a coordination point for ATP. Asp-18 lines the Mg(2+) pocket. Glu-44 provides a ligand contact to K(+). L-methionine is bound by residues Glu-57 and Gln-100. The flexible loop stretch occupies residues 100–110 (QSVDINQGVDR). ATP contacts are provided by residues 165–167 (DAK), Asp-240, 246–247 (RK), Ala-263, and Lys-267. Asp-240 contributes to the L-methionine binding site. Lys-271 contacts L-methionine.

It belongs to the AdoMet synthase family. In terms of assembly, homotetramer; dimer of dimers. Mg(2+) is required as a cofactor. Requires K(+) as cofactor.

The protein localises to the cytoplasm. It carries out the reaction L-methionine + ATP + H2O = S-adenosyl-L-methionine + phosphate + diphosphate. The protein operates within amino-acid biosynthesis; S-adenosyl-L-methionine biosynthesis; S-adenosyl-L-methionine from L-methionine: step 1/1. Its function is as follows. Catalyzes the formation of S-adenosylmethionine (AdoMet) from methionine and ATP. The overall synthetic reaction is composed of two sequential steps, AdoMet formation and the subsequent tripolyphosphate hydrolysis which occurs prior to release of AdoMet from the enzyme. The sequence is that of S-adenosylmethionine synthase from Pseudomonas aeruginosa (strain UCBPP-PA14).